Reading from the N-terminus, the 125-residue chain is Phosphoribosyl-AMP cyclohydrolase (125 aa).

Aspartate 86 contacts Mg(2+). Cysteine 87 is a binding site for Zn(2+). Positions 88 and 90 each coordinate Mg(2+). Residues cysteine 103 and cysteine 110 each contribute to the Zn(2+) site.

The protein belongs to the PRA-CH family. As to quaternary structure, homodimer. Requires Mg(2+) as cofactor. Zn(2+) serves as cofactor.

It localises to the cytoplasm. The enzyme catalyses 1-(5-phospho-beta-D-ribosyl)-5'-AMP + H2O = 1-(5-phospho-beta-D-ribosyl)-5-[(5-phospho-beta-D-ribosylamino)methylideneamino]imidazole-4-carboxamide. It functions in the pathway amino-acid biosynthesis; L-histidine biosynthesis; L-histidine from 5-phospho-alpha-D-ribose 1-diphosphate: step 3/9. Catalyzes the hydrolysis of the adenine ring of phosphoribosyl-AMP. The polypeptide is Phosphoribosyl-AMP cyclohydrolase (Erythrobacter litoralis (strain HTCC2594)).